The sequence spans 950 residues: Zinc finger CCCH domain-containing protein 3 (950 aa).

4 disordered regions span residues 32–106 (GNSS…HPEP), 127–182 (IKPP…TKVG), 201–220 (VVKS…RTVS), and 314–489 (SEKS…VLRK). Residues 56-74 (RPSRRGFSSHHGPSWRKKY) are compositionally biased toward basic residues. Polar residues predominate over residues 76–96 (LVNQPVESSDPASDPAFQTSL). Residues 327 to 338 (PRTTLESGNKAT) show a composition bias toward polar residues. The segment covering 344-360 (KTEKPQPKVDPEVRPEK) has biased composition (basic and acidic residues). The segment covering 370–388 (SPSKYKWKASSPSASSSSS) has biased composition (low complexity). The segment covering 402-412 (SQLSPVPSRPT) has biased composition (polar residues). Serine 405 bears the Phosphoserine mark. Residues 438-449 (VKSRTKIIRRRG) show a composition bias toward basic residues. The span at 460–470 (SPTTATTSKNH) shows a compositional bias: polar residues. C3H1-type zinc fingers lie at residues 662–690 (EKKR…HDPE), 694–717 (VCTR…HHVS), 718–744 (KEKM…HVYV), 745–772 (SRKA…HTLL), and 773–795 (CPDF…HRNQ). A disordered region spans residues 793-950 (RNQKRHGRRT…GKPLHIKPRL (158 aa)). The span at 828–838 (PTTTQRSVRQM) shows a compositional bias: polar residues. The segment covering 839–849 (SSGLASGAEAP) has biased composition (low complexity). Phosphoserine occurs at positions 851 and 855. Positions 857–888 (RVLASTSTLSSKATAASSPSPSPSTSSPAPSL) are enriched in low complexity. The segment covering 914–928 (SLHSSPSPGGQTETG) has biased composition (polar residues). Serine 918, serine 920, and serine 934 each carry phosphoserine.

As to quaternary structure, interacts with SMAD1, SMAD3, SMAD4, CPSF2 and CPSF3.

It is found in the nucleus. Its function is as follows. Required for the export of polyadenylated mRNAs from the nucleus. Enhances ACVR1B-induced SMAD-dependent transcription. Binds to single-stranded DNA but not to double-stranded DNA in vitro. Involved in RNA cleavage. The protein is Zinc finger CCCH domain-containing protein 3 (Zc3h3) of Mus musculus (Mouse).